A 517-amino-acid chain; its full sequence is Probable G-protein coupled receptor Mth-like 4 (517 aa).

The N-terminal stretch at 1 to 18 is a signal peptide; the sequence is MRILLIAVLFLLMPKSNA. The Extracellular segment spans residues 19–212; sequence EIPGCDFFDT…LSSEHSRTWK (194 aa). 5 disulfide bridges follow: cysteine 23–cysteine 77, cysteine 79–cysteine 84, cysteine 88–cysteine 183, cysteine 89–cysteine 100, and cysteine 145–cysteine 201. Asparagine 39 carries an N-linked (GlcNAc...) asparagine glycan. N-linked (GlcNAc...) asparagine glycosylation is found at asparagine 117 and asparagine 165. A helical transmembrane segment spans residues 213–233; sequence TVAIVISLICIILTISVYLYV. At 234-242 the chain is on the cytoplasmic side; the sequence is EKLRNLHGK. A helical transmembrane segment spans residues 243–263; that stretch reads CFICYLASLFLGYFFLVLNVW. At 264–272 the chain is on the extracellular side; sequence KYSSGFCVT. A helical transmembrane segment spans residues 273–293; it reads AGFLGYFSVMAAFFWLSVIGI. Residues 294–319 lie on the Cytoplasmic side of the membrane; it reads HLRIKFSLASNCLHRLLPENPFRAYN. A helical membrane pass occupies residues 320 to 340; it reads LYAWGIPLIMTAITYTADQVV. The Extracellular portion of the chain corresponds to 341 to 363; that stretch reads KNEKLRPRVGVGKNCWIYTGDMT. A helical membrane pass occupies residues 364-384; sequence VMIYFYGPMLLLIAFNIIMFV. At 385-414 the chain is on the cytoplasmic side; that stretch reads LSAIYIYNIKKNVKGLVHKQQTNQQINDQQ. The helical transmembrane segment at 415-435 threads the bilayer; sequence MFAIFLRLFILMGLSWSFEIL. Topologically, residues 436–459 are extracellular; it reads SFLLTKQQAWARALMVADYFNWSQ. N-linked (GlcNAc...) asparagine glycosylation occurs at asparagine 456. A helical transmembrane segment spans residues 460 to 480; it reads GTIIFVLFILKPSILKLIIAG. Over 481-517 the chain is Cytoplasmic; the sequence is GRQNLPGSHHNSRSKAARYNSTHTACEGSIADPNAYC.

This sequence belongs to the G-protein coupled receptor 2 family. Mth subfamily.

It is found in the cell membrane. The sequence is that of Probable G-protein coupled receptor Mth-like 4 (mthl4) from Drosophila melanogaster (Fruit fly).